The chain runs to 247 residues: Peptidyl-prolyl cis-trans isomerase FKBP17-2, chloroplastic (247 aa).

Residues 1-79 (MANLFTATAP…SSLTRRFGIG (79 aa)) constitute a chloroplast transit peptide. The tract at residues 26 to 64 (QCYASSSNPPEPESSSPPPPPPPPQPLASQQKRKKNVET) is disordered. The span at 34–51 (PPEPESSSPPPPPPPPQP) shows a compositional bias: pro residues. One can recognise a PPIase FKBP-type domain in the interval 141–243 (GDLVVIDLKG…EYIVEIDRVS (103 aa)).

The protein belongs to the FKBP-type PPIase family.

It localises to the plastid. Its subcellular location is the chloroplast thylakoid lumen. The catalysed reaction is [protein]-peptidylproline (omega=180) = [protein]-peptidylproline (omega=0). Its function is as follows. PPIases accelerate the folding of proteins. It catalyzes the cis-trans isomerization of proline imidic peptide bonds in oligopeptides. The chain is Peptidyl-prolyl cis-trans isomerase FKBP17-2, chloroplastic (FKBP17-2) from Arabidopsis thaliana (Mouse-ear cress).